We begin with the raw amino-acid sequence, 704 residues long: Polyribonucleotide nucleotidyltransferase (704 aa).

Asp486 and Asp492 together coordinate Mg(2+). Residues 553–612 (PKIVIVKINPDKIRDVIGPGGKQINKIIEETGVKIDTEQDGTIYISSANEEMNARAKQII) form the KH domain. The 69-residue stretch at 622-690 (GEYYLSTVKR…KQGRVNLSRK (69 aa)) folds into the S1 motif domain.

The protein belongs to the polyribonucleotide nucleotidyltransferase family. The cofactor is Mg(2+).

It localises to the cytoplasm. It carries out the reaction RNA(n+1) + phosphate = RNA(n) + a ribonucleoside 5'-diphosphate. In terms of biological role, involved in mRNA degradation. Catalyzes the phosphorolysis of single-stranded polyribonucleotides processively in the 3'- to 5'-direction. The protein is Polyribonucleotide nucleotidyltransferase of Lysinibacillus sphaericus (strain C3-41).